A 244-amino-acid polypeptide reads, in one-letter code: MNNYKLMIQYDGGRYKGWQRLGNGENTIQGKIETVLSEMVGRKIEIIGSGRTDAGVHALGQVANVKLSENFTVKEVKEYLNRYLPHDISVTEVTLVPDRFHSRYNAKDKTYLYKIWNEDYTHPFMRKYSLHIEKKLHIDNMVKASQLFVGEHDFTAFSNAKSKKKTNTRTIHSITIQDNQGFIDIRVCGDGFLYNMVRKMVGTLIEVGLGEKEPEQVLTILESKDRSQAGFADATGLYLEGISF.

The active-site Nucleophile is D53. Substrate is bound at residue Y111.

This sequence belongs to the tRNA pseudouridine synthase TruA family. In terms of assembly, homodimer.

The enzyme catalyses uridine(38/39/40) in tRNA = pseudouridine(38/39/40) in tRNA. Formation of pseudouridine at positions 38, 39 and 40 in the anticodon stem and loop of transfer RNAs. In Bacillus sp. (strain KSM-64), this protein is tRNA pseudouridine synthase A.